We begin with the raw amino-acid sequence, 289 residues long: Elongation factor Ts (289 aa).

The segment at 80–83 (TDFV) is involved in Mg(2+) ion dislocation from EF-Tu.

This sequence belongs to the EF-Ts family.

The protein localises to the cytoplasm. Associates with the EF-Tu.GDP complex and induces the exchange of GDP to GTP. It remains bound to the aminoacyl-tRNA.EF-Tu.GTP complex up to the GTP hydrolysis stage on the ribosome. The polypeptide is Elongation factor Ts (Francisella tularensis subsp. holarctica (strain LVS)).